The following is a 173-amino-acid chain: Avenin-like a5 (173 aa).

Residues Met-1–Ala-19 form the signal peptide.

It belongs to the prolamin family. Contains 7 disulfide bonds.

Functionally, seed storage protein. Not integrated in the gluten polymer through disulfide bonds, unless incorporated by reduction and reoxidation during dough making. Increases dough strength and bread volume, but decreases dough stability when added into a base wheat flour. This is Avenin-like a5 from Triticum aestivum (Wheat).